The primary structure comprises 188 residues: Phosphoribosylglycinamide formyltransferase (188 aa).

Residue 12–14 coordinates N(1)-(5-phospho-beta-D-ribosyl)glycinamide; it reads GSN. Residues Lys66, 91-94, and Asn108 contribute to the (6R)-10-formyltetrahydrofolate site; that span reads MRLI. His110 (proton donor) is an active-site residue.

It belongs to the GART family.

It carries out the reaction N(1)-(5-phospho-beta-D-ribosyl)glycinamide + (6R)-10-formyltetrahydrofolate = N(2)-formyl-N(1)-(5-phospho-beta-D-ribosyl)glycinamide + (6S)-5,6,7,8-tetrahydrofolate + H(+). It functions in the pathway purine metabolism; IMP biosynthesis via de novo pathway; N(2)-formyl-N(1)-(5-phospho-D-ribosyl)glycinamide from N(1)-(5-phospho-D-ribosyl)glycinamide (10-formyl THF route): step 1/1. Functionally, catalyzes the transfer of a formyl group from 10-formyltetrahydrofolate to 5-phospho-ribosyl-glycinamide (GAR), producing 5-phospho-ribosyl-N-formylglycinamide (FGAR) and tetrahydrofolate. This chain is Phosphoribosylglycinamide formyltransferase, found in Staphylococcus aureus (strain MRSA252).